Consider the following 227-residue polypeptide: Urease accessory protein UreF (227 aa).

It belongs to the UreF family. UreD, UreF and UreG form a complex that acts as a GTP-hydrolysis-dependent molecular chaperone, activating the urease apoprotein by helping to assemble the nickel containing metallocenter of UreC. The UreE protein probably delivers the nickel.

Its subcellular location is the cytoplasm. Required for maturation of urease via the functional incorporation of the urease nickel metallocenter. This chain is Urease accessory protein UreF, found in Methylobacillus flagellatus (strain ATCC 51484 / DSM 6875 / VKM B-1610 / KT).